The chain runs to 86 residues: Sodium channel neurotoxin MeuNaTxalpha-4 (86 aa).

The signal sequence occupies residues 1–19; sequence MNYLILISFALLVITGVES. The region spanning 21–85 is the LCN-type CS-alpha/beta domain; it reads RDAYIAKPHN…VPIRIPGKCH (65 aa). 4 disulfide bridges follow: Cys31–Cys84, Cys35–Cys57, Cys43–Cys67, and Cys47–Cys69. Arg86 is a propeptide (removed by a carboxypeptidase).

Belongs to the long (4 C-C) scorpion toxin superfamily. Sodium channel inhibitor family. Alpha subfamily. In terms of tissue distribution, expressed by the venom gland.

The protein resides in the secreted. In terms of biological role, alpha toxins bind voltage-independently at site-3 of sodium channels (Nav) and inhibit the inactivation of the activated channels, thereby blocking neuronal transmission. This toxin inhibits inactivation of drosophila DmNav1 (EC(50)=130 nM). The chain is Sodium channel neurotoxin MeuNaTxalpha-4 from Mesobuthus eupeus (Lesser Asian scorpion).